A 217-amino-acid chain; its full sequence is Tectonin-1 (217 aa).

6 tandem repeats follow at residues 2 to 37 (VHWEKHEGELSVVGVGAGSNDIWGVNHLGHIYHWDG), 38 to 74 (HKWHKVDGELTNISVGHDGEVWGVNKNHNIYRLDRSN), 75 to 111 (NKWTQIPGELVQVSVGSHHHVWGVNHLDHIYKWDHHH), 112 to 146 (NKWDKIDGALTNVSVGKDGTVYGVNRGHQIYRWDG), 147 to 182 (SKVDLVLGELVQIHVSDAEKIVGVNHLDHIYRLKHG), and 183 to 217 (KDWEKLDGELTWVSVGHHGEVWGVNKLHHIYKATL). A 6 X approximate tandem repeats region spans residues 2–217 (VHWEKHEGEL…KLHHIYKATL (216 aa)).

This sequence belongs to the tectonin family.

The protein localises to the cell surface. It is found in the cytoplasmic vesicle membrane. Probably involved in bacterial recognition. May be a lectin that function as part of a transmembrane signaling complex during phagocytosis. The chain is Tectonin-1 (TECA) from Physarum polycephalum (Slime mold).